A 392-amino-acid polypeptide reads, in one-letter code: HCLS1-binding protein 3 (392 aa).

The residue at position 1 (Met-1) is an N-acetylmethionine. A phosphoserine mark is found at Ser-3, Ser-139, and Ser-194. In terms of domain architecture, PX spans 19-142; sequence GLDLTVPQHQ…EFLGTRSPGA (124 aa). Disordered regions lie at residues 138–162, 174–265, and 319–364; these read RSPG…QTGN, DQVA…PLKL, and GAEP…KPQE. Residues 190-201 show a composition bias toward acidic residues; that stretch reads DAEESLEEEEAL. Basic residues predominate over residues 208-220; the sequence is RSKKPKKHPKVAV. Residue Ser-249 is modified to Phosphoserine. Residues 325–335 show a composition bias toward pro residues; the sequence is KPQLKPKPPVA. Lys-337 bears the N6-acetyllysine mark.

As to quaternary structure, binds HCLS1. Interacts with the SH3 domain of HCLS1 in vitro.

In terms of biological role, may be a modulator of IL-2 signaling. The chain is HCLS1-binding protein 3 (HS1BP3) from Homo sapiens (Human).